Here is a 272-residue protein sequence, read N- to C-terminus: Cell division protein FtsQ (272 aa).

Over 1-43 (MEYNPPNTRERIVARRQRMRRNSTEPVVPGWRWRLREGLRSGR) the chain is Cytoplasmic. A helical transmembrane segment spans residues 44–64 (IVSGIVFVISCFALFYVLFSS). Over 65-272 (RFRVQTVEVV…FYQYRPDGSS (208 aa)) the chain is Extracellular. A POTRA domain is found at 66-133 (FRVQTVEVVG…DRARIVIVER (68 aa)).

This sequence belongs to the FtsQ/DivIB family. FtsQ subfamily.

Its subcellular location is the cell membrane. In terms of biological role, essential cell division protein. The chain is Cell division protein FtsQ from Chloroflexus aurantiacus (strain ATCC 29366 / DSM 635 / J-10-fl).